Reading from the N-terminus, the 607-residue chain is MFPQKITLWLYPLGLFANLFFGTAFCVQWFLIKKRGCSFVPKIFWHLSCSGAVLMICHGFIQSQYPIALLHSFNLIIYFRNLNIASSTPLPISKIVSLLVVSATAITLSFAIGTQYLPHMTWMASPNILHLNLPEANFLWQLIGCIGLTIFSLRFFIQWFYLEYKNQSSLPTPFWKASLVGGSICLIYFLRTGDIVNVLCYGCGLFPSLANLRIASREAIQKPFSCSCFISAGEHSGDTLGGNLLKEIHAKYPDIHCFGVGGPQMRAQNFCTLFSMEKFQISGFWEVLLALPKLWYRRRILYKTILKRNPQAVICIDFPDFHFLLIKKLRSLGYKGKIVHYVCPSIWAWRPSRKTTLEKYLDLLLLILPFEQKLFKDSPLRTVYIGHPLSETIKLFCPKQNWKERLHLPTDKPFVAAFPGSRHSDILRNLTIQVQAFQASDFASTHHLLVSSANPAYDHLILEILQQNRCLHSNIVPSQFRYELMRECDCALAKCGTIVLETALNLTPTIVTCQLRPLDTFLAKYIFNIILPAYSLPNIILGRTIFPEFIGGKKDFRYEDVAAALNILKTSQAQEKQKNACKDVYQAINESASTIKECLPFIFEASY.

Residues 1 to 224 form a unknown region; that stretch reads MFPQKITLWL…ASREAIQKPF (224 aa). The interval 225 to 607 is lipid-A-disaccharide synthase; sequence SCSCFISAGE…CLPFIFEASY (383 aa).

In the C-terminal section; belongs to the LpxB family.

It carries out the reaction a lipid X + a UDP-2-N,3-O-bis[(3R)-3-hydroxyacyl]-alpha-D-glucosamine = a lipid A disaccharide + UDP + H(+). Its pathway is bacterial outer membrane biogenesis; LPS lipid A biosynthesis. In terms of biological role, condensation of UDP-2,3-diacylglucosamine and 2,3-diacylglucosamine-1-phosphate to form lipid A disaccharide, a precursor of lipid A, a phosphorylated glycolipid that anchors the lipopolysaccharide to the outer membrane of the cell. The polypeptide is Lipid-A-disaccharide synthase (lpxB) (Chlamydia muridarum (strain MoPn / Nigg)).